The chain runs to 461 residues: uncharacterized protein (461 aa).

Transmembrane regions (helical) follow at residues 18–38 (IITWLLVILPFPILGTLFLIY) and 124–144 (FIFLEYFIIAEGLMWGEILSI). PLD phosphodiesterase domains follow at residues 197–224 (YNYRDHRKILVIDNKVAFNGGINLADEY) and 374–401 (TPGFVHAKVFIADDIKAVVGTINLDYRS).

It belongs to the phospholipase D family. Cardiolipin synthase subfamily.

It is found in the cell membrane. This is an uncharacterized protein from Streptococcus mutans serotype c (strain ATCC 700610 / UA159).